Here is a 156-residue protein sequence, read N- to C-terminus: Ribosomal RNA large subunit methyltransferase H (156 aa).

S-adenosyl-L-methionine contacts are provided by residues L73, G104, and 123–128 (LSSLTL).

Belongs to the RNA methyltransferase RlmH family. As to quaternary structure, homodimer.

It is found in the cytoplasm. It carries out the reaction pseudouridine(1915) in 23S rRNA + S-adenosyl-L-methionine = N(3)-methylpseudouridine(1915) in 23S rRNA + S-adenosyl-L-homocysteine + H(+). Its function is as follows. Specifically methylates the pseudouridine at position 1915 (m3Psi1915) in 23S rRNA. In Neisseria meningitidis serogroup A / serotype 4A (strain DSM 15465 / Z2491), this protein is Ribosomal RNA large subunit methyltransferase H.